The sequence spans 465 residues: Sensor histidine kinase ZraS (465 aa).

At 1–14 (MSFIRLHKDAAATW) the chain is on the cytoplasmic side. A helical membrane pass occupies residues 15–35 (LSRLLPAAIFILVGLFSIMVI). Residues 36–202 (RDYGRESAAA…AATQAREWRN (167 aa)) lie on the Periplasmic side of the membrane. Residues 203–223 (TLIVLSALAAVLLATLLAFFW) form a helical membrane-spanning segment. Topologically, residues 224–465 (HQRYQRSHRE…WLPVIARQQD (242 aa)) are cytoplasmic. Positions 253–461 (GVAHEIRNPL…VFTIWLPVIA (209 aa)) constitute a Histidine kinase domain. His256 is modified (phosphohistidine; by autocatalysis).

In terms of processing, autophosphorylated.

The protein localises to the cell inner membrane. The catalysed reaction is ATP + protein L-histidine = ADP + protein N-phospho-L-histidine.. Its activity is regulated as follows. Activity of the ZraS/ZraR two-component system is repressed by the zinc-bound form of ZraP, which probably interacts with the periplasmic region of ZraS. Part of the Zra signaling pathway, an envelope stress response (ESR) system composed of the periplasmic accessory protein ZraP, the histidine kinase ZraS and the transcriptional regulator ZraR. The ZraPSR system contributes to antibiotic resistance and is important for membrane integrity in the presence of membrane-targeting biocides. ZraS is a member of the two-component regulatory system ZraS/ZraR. Functions as a membrane-associated sensor kinase that phosphorylates ZraR in response to high concentrations of Zn(2+) or Pb(2+) in the medium. In Salmonella typhimurium (strain LT2 / SGSC1412 / ATCC 700720), this protein is Sensor histidine kinase ZraS.